Reading from the N-terminus, the 207-residue chain is Guanylate kinase (207 aa).

The region spanning 4–184 (GTLYIVSAPS…ALSDLKTIIR (181 aa)) is the Guanylate kinase-like domain. Residue 11-18 (APSGAGKS) participates in ATP binding.

The protein belongs to the guanylate kinase family.

It is found in the cytoplasm. The enzyme catalyses GMP + ATP = GDP + ADP. In terms of biological role, essential for recycling GMP and indirectly, cGMP. The sequence is that of Guanylate kinase (gmk) from Salmonella typhimurium (strain LT2 / SGSC1412 / ATCC 700720).